The primary structure comprises 428 residues: Glutamyl-tRNA reductase (428 aa).

Substrate is bound by residues 55-58 (TCNR), serine 114, 119-121 (ETQ), and glutamine 125. Cysteine 56 serves as the catalytic Nucleophile. An NADP(+)-binding site is contributed by 194 to 199 (GAGEMI).

The protein belongs to the glutamyl-tRNA reductase family. Homodimer.

The enzyme catalyses (S)-4-amino-5-oxopentanoate + tRNA(Glu) + NADP(+) = L-glutamyl-tRNA(Glu) + NADPH + H(+). Its pathway is porphyrin-containing compound metabolism; protoporphyrin-IX biosynthesis; 5-aminolevulinate from L-glutamyl-tRNA(Glu): step 1/2. Its function is as follows. Catalyzes the NADPH-dependent reduction of glutamyl-tRNA(Glu) to glutamate 1-semialdehyde (GSA). This Paraburkholderia xenovorans (strain LB400) protein is Glutamyl-tRNA reductase.